We begin with the raw amino-acid sequence, 329 residues long: Probable ABC transporter permease protein MG188 (329 aa).

The next 6 helical transmembrane spans lie at 30 to 50 (FLLFLPALLTTILFTIIPFFL), 96 to 116 (LISLPFSIIIAIVIASAIVFV), 128 to 148 (VFFLPYVTSGVAISIAFVYIF), 176 to 196 (ALWAILIFGVWKNLAFNVLII), 234 to 254 (LIFLTTLLILGGMQVFPLALF), and 283 to 303 (NLAGAATLVLFVLGVCYGLVL). One can recognise an ABC transmembrane type-1 domain in the interval 88 to 303 (LRNSFLYSLI…VLGVCYGLVL (216 aa)).

The protein belongs to the binding-protein-dependent transport system permease family. MalFG subfamily.

The protein localises to the cell membrane. Functionally, probably part of a binding-protein-dependent transport system. Probably responsible for the translocation of the substrate across the membrane. In Mycoplasma genitalium (strain ATCC 33530 / DSM 19775 / NCTC 10195 / G37) (Mycoplasmoides genitalium), this protein is Probable ABC transporter permease protein MG188.